A 119-amino-acid chain; its full sequence is Immunoglobulin heavy variable 3-72 (119 aa).

Positions M1 to C19 are cleaved as a signal peptide. Residues E20–S44 form a framework-1 region. An Ig-like domain is found at E20–R119. An intrachain disulfide couples C41 to C117. The tract at residues G45–Y52 is complementarity-determining-1. A framework-2 region spans residues M53–R69. The complementarity-determining-2 stretch occupies residues T70–T79. Residues E80–C117 form a framework-3 region. Residues A118 to R119 are complementarity-determining-3.

Immunoglobulins are composed of two identical heavy chains and two identical light chains; disulfide-linked.

The protein resides in the secreted. Its subcellular location is the cell membrane. In terms of biological role, v region of the variable domain of immunoglobulin heavy chains that participates in the antigen recognition. Immunoglobulins, also known as antibodies, are membrane-bound or secreted glycoproteins produced by B lymphocytes. In the recognition phase of humoral immunity, the membrane-bound immunoglobulins serve as receptors which, upon binding of a specific antigen, trigger the clonal expansion and differentiation of B lymphocytes into immunoglobulins-secreting plasma cells. Secreted immunoglobulins mediate the effector phase of humoral immunity, which results in the elimination of bound antigens. The antigen binding site is formed by the variable domain of one heavy chain, together with that of its associated light chain. Thus, each immunoglobulin has two antigen binding sites with remarkable affinity for a particular antigen. The variable domains are assembled by a process called V-(D)-J rearrangement and can then be subjected to somatic hypermutations which, after exposure to antigen and selection, allow affinity maturation for a particular antigen. In Homo sapiens (Human), this protein is Immunoglobulin heavy variable 3-72.